Consider the following 301-residue polypeptide: NAD kinase (301 aa).

The active-site Proton acceptor is the Asp84. Residues 84–85 (DG), Arg89, 158–159 (NE), Lys169, Asn188, 199–204 (TAYSFS), and Gln258 contribute to the NAD(+) site.

It belongs to the NAD kinase family. A divalent metal cation is required as a cofactor.

The protein resides in the cytoplasm. It catalyses the reaction NAD(+) + ATP = ADP + NADP(+) + H(+). In terms of biological role, involved in the regulation of the intracellular balance of NAD and NADP, and is a key enzyme in the biosynthesis of NADP. Catalyzes specifically the phosphorylation on 2'-hydroxyl of the adenosine moiety of NAD to yield NADP. The sequence is that of NAD kinase from Tropheryma whipplei (strain Twist) (Whipple's bacillus).